The following is a 479-amino-acid chain: MAPADIGLIGLAVMGKNLVLNMIDHGFAVSVYNRSPEKTEEFLKEHGENISLQGFTAIEEFVQSLKRPRKIMIMIKAGAPVDEMISSLLPFLEEGDILIDGGNSYYLDSERRYIDLKKKGILFVGMGVSGGEEGARKGPSIMPGGNIEAWPVIAPIFQSIAAQVDGQPCCSWIGTGGAGHFVKAVHNGIEYGDIQLICETYEILKSRLDLSLEQIGNIFFEWNQTDLNSYLMGASAAVLTAKDENGVAVASTILDVAGQKGTGRWVAEDAIKAGVPMSLIIESVLARYLSAWKEVRRQAAREFPVASLLYQPSQEASVLIEDAREALYAAKIISYAQGFMLLKQISEERNWDLNLGELALIWRGGCIIQSAFLDKIHQGFESCPDAHSLMLQDYFKNVLLNSETGFRRAILHAVGAGVAIPCLASALAFYDGYRTENSPLFLVQGLRDYFGAHGYERQDRPRGEFYHTDWLGSKNASRM.

NADP(+)-binding positions include 10-15, 33-35, 75-77, and asparagine 103; these read GLAVMG, NRS, and IKA. Residues asparagine 103 and 129–131 each bind substrate; that span reads SGG. The active-site Proton acceptor is lysine 183. 186–187 contacts substrate; that stretch reads HN. Glutamate 190 serves as the catalytic Proton donor. 5 residues coordinate substrate: tyrosine 191, lysine 260, arginine 287, arginine 447, and histidine 453.

Belongs to the 6-phosphogluconate dehydrogenase family. Homodimer.

It catalyses the reaction 6-phospho-D-gluconate + NADP(+) = D-ribulose 5-phosphate + CO2 + NADPH. It functions in the pathway carbohydrate degradation; pentose phosphate pathway; D-ribulose 5-phosphate from D-glucose 6-phosphate (oxidative stage): step 3/3. In terms of biological role, catalyzes the oxidative decarboxylation of 6-phosphogluconate to ribulose 5-phosphate and CO(2), with concomitant reduction of NADP to NADPH. This chain is 6-phosphogluconate dehydrogenase, decarboxylating (gnd), found in Chlamydia muridarum (strain MoPn / Nigg).